Here is a 170-residue protein sequence, read N- to C-terminus: Sec-independent protein translocase protein TatB (170 aa).

A helical transmembrane segment spans residues 1–21 (MIDLGISKLALIGAVALIVIG).

Belongs to the TatB family. As to quaternary structure, the Tat system comprises two distinct complexes: a TatABC complex, containing multiple copies of TatA, TatB and TatC subunits, and a separate TatA complex, containing only TatA subunits. Substrates initially bind to the TatABC complex, which probably triggers association of the separate TatA complex to form the active translocon.

The protein resides in the cell inner membrane. Part of the twin-arginine translocation (Tat) system that transports large folded proteins containing a characteristic twin-arginine motif in their signal peptide across membranes. Together with TatC, TatB is part of a receptor directly interacting with Tat signal peptides. TatB may form an oligomeric binding site that transiently accommodates folded Tat precursor proteins before their translocation. The sequence is that of Sec-independent protein translocase protein TatB from Cupriavidus necator (strain ATCC 17699 / DSM 428 / KCTC 22496 / NCIMB 10442 / H16 / Stanier 337) (Ralstonia eutropha).